Reading from the N-terminus, the 131-residue chain is Putative superoxide reductase (131 aa).

Fe cation-binding residues include glutamate 15, histidine 17, histidine 45, histidine 51, cysteine 115, and histidine 118.

This sequence belongs to the desulfoferrodoxin family. It depends on Fe cation as a cofactor.

It catalyses the reaction reduced [rubredoxin] + superoxide + 2 H(+) = oxidized [rubredoxin] + H2O2. In terms of biological role, uses electrons from reduced NADP, by way of rubredoxin and an oxidoreductase, to catalyze the reduction of superoxide to hydrogen peroxide. In Thermotoga maritima (strain ATCC 43589 / DSM 3109 / JCM 10099 / NBRC 100826 / MSB8), this protein is Putative superoxide reductase.